The primary structure comprises 241 residues: DNA repair protein RecO (241 aa).

Belongs to the RecO family.

Functionally, involved in DNA repair and RecF pathway recombination. The sequence is that of DNA repair protein RecO from Orientia tsutsugamushi (strain Boryong) (Rickettsia tsutsugamushi).